Here is a 205-residue protein sequence, read N- to C-terminus: Probable nicotinate-nucleotide adenylyltransferase (205 aa).

It belongs to the NadD family.

It carries out the reaction nicotinate beta-D-ribonucleotide + ATP + H(+) = deamido-NAD(+) + diphosphate. The protein operates within cofactor biosynthesis; NAD(+) biosynthesis; deamido-NAD(+) from nicotinate D-ribonucleotide: step 1/1. Catalyzes the reversible adenylation of nicotinate mononucleotide (NaMN) to nicotinic acid adenine dinucleotide (NaAD). The sequence is that of Probable nicotinate-nucleotide adenylyltransferase from Arthrobacter sp. (strain FB24).